A 311-amino-acid polypeptide reads, in one-letter code: Aspartate carbamoyltransferase catalytic subunit (311 aa).

Carbamoyl phosphate is bound by residues R55 and T56. K85 serves as a coordination point for L-aspartate. Carbamoyl phosphate is bound by residues R106, H135, and Q138. L-aspartate contacts are provided by R168 and R230. Residues L268 and P269 each coordinate carbamoyl phosphate.

It belongs to the aspartate/ornithine carbamoyltransferase superfamily. ATCase family. In terms of assembly, heterododecamer (2C3:3R2) of six catalytic PyrB chains organized as two trimers (C3), and six regulatory PyrI chains organized as three dimers (R2).

It catalyses the reaction carbamoyl phosphate + L-aspartate = N-carbamoyl-L-aspartate + phosphate + H(+). Its pathway is pyrimidine metabolism; UMP biosynthesis via de novo pathway; (S)-dihydroorotate from bicarbonate: step 2/3. Its function is as follows. Catalyzes the condensation of carbamoyl phosphate and aspartate to form carbamoyl aspartate and inorganic phosphate, the committed step in the de novo pyrimidine nucleotide biosynthesis pathway. The sequence is that of Aspartate carbamoyltransferase catalytic subunit from Salmonella arizonae (strain ATCC BAA-731 / CDC346-86 / RSK2980).